A 297-amino-acid chain; its full sequence is B-lymphocyte antigen CD20 (297 aa).

Residues 1–56 are Cytoplasmic-facing; it reads MTTPRNSVNGTFPAEPMKGPIAMQSGPKPLFRRMSSLVGPTQSFFMRESKTLGAVQ. Position 36 is a phosphoserine (Ser36). Residues 57–78 form a helical membrane-spanning segment; sequence IMNGLFHIALGGLLMIPAGIYA. The segment at 74–80 is epitope 1; sequence AGIYAPI. Over 79 to 84 the chain is Extracellular; the sequence is PICVTV. Residues 85–105 traverse the membrane as a helical segment; the sequence is WYPLWGGIMYIISGSLLAATE. Over 106–120 the chain is Cytoplasmic; that stretch reads KNSRKCLVKGKMIMN. Cys111 is lipidated: S-palmitoyl cysteine. Residues 121-141 form a helical membrane-spanning segment; that stretch reads SLSLFAAISGMILSIMDILNI. The Extracellular segment spans residues 142 to 188; sequence KISHFLKMESLNFIRAHTPYINIYNCEPANPSEKNSPSTQYCYSIQS. Positions 146-160 are epitope 2; sequence FLKMESLNFIRAHTP. Cys167 and Cys183 form a disulfide bridge. The segment at 168–175 is epitope 3 (recognized by antibodies, including Rituximab); the sequence is EPANPSEK. A helical transmembrane segment spans residues 189-209; it reads LFLGILSVMLIFAFFQELVIA. The Cytoplasmic segment spans residues 210–297; the sequence is GIVENEWKRT…SSPIENDSSP (88 aa). Residue Cys220 is the site of S-palmitoyl cysteine attachment. At Ser225 the chain carries Phosphoserine. Thr239 is modified (phosphothreonine). The disordered stretch occupies residues 247–297; it reads VGLTETSSQPKNEEDIEIIPIQEEEEEETETNFPEPPQDQESSPIENDSSP. The segment covering 260-276 has biased composition (acidic residues); that stretch reads EDIEIIPIQEEEEEETE. The segment covering 285 to 297 has biased composition (polar residues); the sequence is DQESSPIENDSSP.

It belongs to the MS4A family. As to quaternary structure, forms homotetramers. Interacts with the heavy and light chains of cell surface IgM, the antigen-binding components of the BCR. Post-translationally, phosphorylated on serines and threonines in resting B-cells. Protein kinase C/PKC can use CD20 as substrate. Expressed on B-cells.

Its subcellular location is the cell membrane. Its function is as follows. B-lymphocyte-specific membrane protein that plays a role in the regulation of cellular calcium influx necessary for the development, differentiation, and activation of B-lymphocytes. Functions as a store-operated calcium (SOC) channel component promoting calcium influx after activation by the B-cell receptor/BCR. In Homo sapiens (Human), this protein is B-lymphocyte antigen CD20 (MS4A1).